We begin with the raw amino-acid sequence, 380 residues long: MYG1 exonuclease (380 aa).

Residues 1–46 constitute a mitochondrion transit peptide; the sequence is MGRRFLRGILTLPLRSVLQAQHRMLGSEQDPPAKRPRNNLMAPPRI. An N6-acetyllysine mark is found at Lys-266 and Lys-272.

This sequence belongs to the MYG1 family. In terms of tissue distribution, ubiquitously expressed, with highest levels in testis.

Its subcellular location is the nucleus. The protein localises to the nucleoplasm. The protein resides in the mitochondrion matrix. It localises to the nucleolus. In terms of biological role, 3'-5' RNA exonuclease which cleaves in situ on specific transcripts in both nucleus and mitochondrion. Involved in regulating spatially segregated organellar RNA processing, acts as a coordinator of nucleo-mitochondrial crosstalk. In nucleolus, processes pre-ribosomal RNA involved in ribosome assembly and alters cytoplasmic translation. In mitochondrial matrix, processes 3'-termini of the mito-ribosomal and messenger RNAs and controls translation of mitochondrial proteins. The sequence is that of MYG1 exonuclease from Mus musculus (Mouse).